Reading from the N-terminus, the 250-residue chain is Insertion sequence IS232 putative ATP-binding protein (250 aa).

Residue 108 to 115 coordinates ATP; it reads GPSGVGKT.

The protein belongs to the IS21/IS1162 putative ATP-binding protein family.

The polypeptide is Insertion sequence IS232 putative ATP-binding protein (Bacillus thuringiensis subsp. berliner).